The following is a 604-amino-acid chain: Proline--tRNA ligase (604 aa).

The protein belongs to the class-II aminoacyl-tRNA synthetase family. ProS type 1 subfamily. In terms of assembly, homodimer.

The protein resides in the cytoplasm. It catalyses the reaction tRNA(Pro) + L-proline + ATP = L-prolyl-tRNA(Pro) + AMP + diphosphate. In terms of biological role, catalyzes the attachment of proline to tRNA(Pro) in a two-step reaction: proline is first activated by ATP to form Pro-AMP and then transferred to the acceptor end of tRNA(Pro). As ProRS can inadvertently accommodate and process non-cognate amino acids such as alanine and cysteine, to avoid such errors it has two additional distinct editing activities against alanine. One activity is designated as 'pretransfer' editing and involves the tRNA(Pro)-independent hydrolysis of activated Ala-AMP. The other activity is designated 'posttransfer' editing and involves deacylation of mischarged Ala-tRNA(Pro). The misacylated Cys-tRNA(Pro) is not edited by ProRS. This chain is Proline--tRNA ligase, found in Trichormus variabilis (strain ATCC 29413 / PCC 7937) (Anabaena variabilis).